Reading from the N-terminus, the 500-residue chain is Glycerol kinase (500 aa).

Thr12 serves as a coordination point for ADP. ATP-binding residues include Thr12, Thr13, and Ser14. Residue Thr12 participates in sn-glycerol 3-phosphate binding. Arg16 is an ADP binding site. Sn-glycerol 3-phosphate is bound by residues Arg82, Glu83, Tyr135, and Asp245. Glycerol is bound by residues Arg82, Glu83, Tyr135, Asp245, and Gln246. Thr267 and Gly310 together coordinate ADP. Positions 267, 310, 314, and 411 each coordinate ATP. ADP contacts are provided by Gly411 and Asn415.

This sequence belongs to the FGGY kinase family. As to quaternary structure, homotetramer and homodimer (in equilibrium).

The catalysed reaction is glycerol + ATP = sn-glycerol 3-phosphate + ADP + H(+). It functions in the pathway polyol metabolism; glycerol degradation via glycerol kinase pathway; sn-glycerol 3-phosphate from glycerol: step 1/1. With respect to regulation, activated by phosphorylation and inhibited by fructose 1,6-bisphosphate (FBP). Functionally, key enzyme in the regulation of glycerol uptake and metabolism. Catalyzes the phosphorylation of glycerol to yield sn-glycerol 3-phosphate. The protein is Glycerol kinase of Clostridium perfringens (strain 13 / Type A).